A 287-amino-acid polypeptide reads, in one-letter code: Ribosomal RNA small subunit methyltransferase A (287 aa).

Residues Asn-28, Leu-30, Gly-55, Glu-77, Asp-103, and Asn-123 each coordinate S-adenosyl-L-methionine.

The protein belongs to the class I-like SAM-binding methyltransferase superfamily. rRNA adenine N(6)-methyltransferase family. RsmA subfamily.

It is found in the cytoplasm. The catalysed reaction is adenosine(1518)/adenosine(1519) in 16S rRNA + 4 S-adenosyl-L-methionine = N(6)-dimethyladenosine(1518)/N(6)-dimethyladenosine(1519) in 16S rRNA + 4 S-adenosyl-L-homocysteine + 4 H(+). In terms of biological role, specifically dimethylates two adjacent adenosines (A1518 and A1519) in the loop of a conserved hairpin near the 3'-end of 16S rRNA in the 30S particle. May play a critical role in biogenesis of 30S subunits. The protein is Ribosomal RNA small subunit methyltransferase A of Nitrobacter winogradskyi (strain ATCC 25391 / DSM 10237 / CIP 104748 / NCIMB 11846 / Nb-255).